A 204-amino-acid polypeptide reads, in one-letter code: ATP-dependent Clp protease proteolytic subunit 1 (204 aa).

Catalysis depends on Ser97, which acts as the Nucleophile. His122 is an active-site residue.

Belongs to the peptidase S14 family. Fourteen ClpP subunits assemble into 2 heptameric rings which stack back to back to give a disk-like structure with a central cavity, resembling the structure of eukaryotic proteasomes.

It localises to the cytoplasm. The enzyme catalyses Hydrolysis of proteins to small peptides in the presence of ATP and magnesium. alpha-casein is the usual test substrate. In the absence of ATP, only oligopeptides shorter than five residues are hydrolyzed (such as succinyl-Leu-Tyr-|-NHMec, and Leu-Tyr-Leu-|-Tyr-Trp, in which cleavage of the -Tyr-|-Leu- and -Tyr-|-Trp bonds also occurs).. Its function is as follows. Cleaves peptides in various proteins in a process that requires ATP hydrolysis. Has a chymotrypsin-like activity. Plays a major role in the degradation of misfolded proteins. The sequence is that of ATP-dependent Clp protease proteolytic subunit 1 from Trichormus variabilis (strain ATCC 29413 / PCC 7937) (Anabaena variabilis).